Consider the following 81-residue polypeptide: Antitoxin MT2731 (81 aa).

Functionally, antitoxin component of a type II toxin-antitoxin (TA) system. Neutralizes the effect of cognate toxin MT2730. This Mycobacterium tuberculosis (strain CDC 1551 / Oshkosh) protein is Antitoxin MT2731.